The chain runs to 149 residues: Large ribosomal subunit protein uL15 (149 aa).

A disordered region spans residues 21–54; sequence RGSASGLGCTSGKGNKGQNARSGGGVRPGFEGGQ. 2 stretches are compositionally biased toward gly residues: residues 23–35 and 42–52; these read SASG…GKGN and SGGGVRPGFEG.

The protein belongs to the universal ribosomal protein uL15 family. Part of the 50S ribosomal subunit.

Functionally, binds to the 23S rRNA. In Lawsonia intracellularis (strain PHE/MN1-00), this protein is Large ribosomal subunit protein uL15.